The primary structure comprises 556 residues: Phenylalanine--tRNA ligase beta subunit (556 aa).

Residues 278-354 enclose the B5 domain; it reads LTPKEFEVSF…IAYGYNNIDP (77 aa). Residues Asp332, Asp338, Glu341, and Asp342 each coordinate Mg(2+).

This sequence belongs to the phenylalanyl-tRNA synthetase beta subunit family. Type 2 subfamily. Tetramer of two alpha and two beta subunits. The cofactor is Mg(2+).

The protein localises to the cytoplasm. It carries out the reaction tRNA(Phe) + L-phenylalanine + ATP = L-phenylalanyl-tRNA(Phe) + AMP + diphosphate + H(+). The sequence is that of Phenylalanine--tRNA ligase beta subunit from Pyrococcus furiosus (strain ATCC 43587 / DSM 3638 / JCM 8422 / Vc1).